The sequence spans 297 residues: Mitochondrial nicotinamide adenine dinucleotide transporter SLC25A52 (297 aa).

Solcar repeat units lie at residues 28 to 108, 116 to 200, and 209 to 296; these read VGEM…LSCL, PEFA…IKEH, and AHLV…LLKF. The next 6 membrane-spanning stretches (helical) occupy residues 34–51, 85–105, 118–138, 179–199, 215–235, and 268–289; these read YLCGCCAAFNNVAITYPI, LPPLMQKTTTLALMFGLYEDL, FATHGVAAVLAGTAEAIFTPL, ILFRNGLSNVLFFGLRGPIKE, FIGGGLLGAMLGFLCFPINVV, and LFRGAHLNYHRSLISWGIINAT.

This sequence belongs to the mitochondrial carrier (TC 2.A.29) family.

Its subcellular location is the mitochondrion inner membrane. The catalysed reaction is NAD(+)(in) = NAD(+)(out). Its function is as follows. Mitochondrial membrane carrier protein that mediates the import of NAD(+) into mitochondria. Compared to SLC25A51, SLC25A52-mediated transport is not essential for the import of NAD(+) in mitochondria. The transport mechanism, uniport or antiport, its electrogenicity and substrate selectivity, remain to be elucidated. The sequence is that of Mitochondrial nicotinamide adenine dinucleotide transporter SLC25A52 from Homo sapiens (Human).